A 264-amino-acid chain; its full sequence is Isoprenyl transferase (264 aa).

Asp-43 is a catalytic residue. Asp-43 contributes to the Mg(2+) binding site. Substrate-binding positions include 44 to 47 (GNGR), Trp-48, Arg-56, His-60, and 88 to 90 (STE). Asn-91 acts as the Proton acceptor in catalysis. Substrate-binding positions include Trp-92, Arg-94, Arg-211, and 217–219 (RTS). Position 230 (Glu-230) interacts with Mg(2+).

Belongs to the UPP synthase family. As to quaternary structure, homodimer. The cofactor is Mg(2+).

Its function is as follows. Catalyzes the condensation of isopentenyl diphosphate (IPP) with allylic pyrophosphates generating different type of terpenoids. The protein is Isoprenyl transferase of Bifidobacterium longum (strain NCC 2705).